Reading from the N-terminus, the 270-residue chain is Putative phosphoenolpyruvate synthase regulatory protein (270 aa).

150-157 (GVSRCGKT) contributes to the ADP binding site.

It belongs to the pyruvate, phosphate/water dikinase regulatory protein family. PSRP subfamily.

It catalyses the reaction [pyruvate, water dikinase] + ADP = [pyruvate, water dikinase]-phosphate + AMP + H(+). The catalysed reaction is [pyruvate, water dikinase]-phosphate + phosphate + H(+) = [pyruvate, water dikinase] + diphosphate. Its function is as follows. Bifunctional serine/threonine kinase and phosphorylase involved in the regulation of the phosphoenolpyruvate synthase (PEPS) by catalyzing its phosphorylation/dephosphorylation. The chain is Putative phosphoenolpyruvate synthase regulatory protein from Shewanella amazonensis (strain ATCC BAA-1098 / SB2B).